The sequence spans 138 residues: Translation initiation factor 5A (138 aa).

Lys37 is modified (hypusine).

Belongs to the eIF-5A family.

It localises to the cytoplasm. Functionally, functions by promoting the formation of the first peptide bond. This chain is Translation initiation factor 5A (eif5a), found in Pyrococcus horikoshii (strain ATCC 700860 / DSM 12428 / JCM 9974 / NBRC 100139 / OT-3).